Here is a 399-residue protein sequence, read N- to C-terminus: MEEEHINQRPSATVEEYSYSEADFVFSGLSWKERRQYAEDTSFLSPFDKALQSKWEQKMNEGLFRYPLRNLQTKILPGSLSYVAQLNIQRSINRRKPEDIWSIQQKFNPNQFNYNKIKPEEIVFQMIRSETEHCVDSDKVHGSSVNGMGTSDCKSGSTHQRCCILECKGGCTLVVINVSPLEFGHVLFMPDPSLCLPQILTEDLMLFGLESVLLSAHPGFRVGFNSLGGFASVNHLHLHGFYLDHDLFIESSSSKPLCPEMNFHLITHFPAPSFLFYTDGRNLKSTAQNICKVTDFLVAKNIAHNLFITRGSNPDTGNGSEGRNGIRVNIWARKPSFGAKEVSAFNVALCELAGHLPVKNQEDFNSITEDSVIDIIHNCLLADDEFTQLSLDLVEYLRK.

The active-site Tele-GMP-histidine intermediate is His237.

This sequence belongs to the GDPGP1 family.

Its subcellular location is the cytoplasm. The catalysed reaction is GDP-alpha-D-glucose + phosphate = alpha-D-glucose 1-phosphate + GDP + H(+). Its function is as follows. Specific and highly efficient GDP-D-glucose phosphorylase regulating the levels of GDP-D-glucose in cells. The protein is GDP-D-glucose phosphorylase 1 (gdpgp1) of Xenopus laevis (African clawed frog).